The chain runs to 103 residues: Sperm-associated antigen 11A (103 aa).

The first 24 residues, 1–24 (MRQRLLPSVTSLLLVALLFPGSSQ), serve as a signal peptide directing secretion. A glycan (N-linked (GlcNAc...) asparagine) is linked at asparagine 29.

It belongs to the SPAG11 family.

The protein resides in the secreted. Its function is as follows. Has antimicrobial activity against E.coli. Plays a role in the defense response in the male reproductive tract, contributing to sperm maturation, storage and protection. The protein is Sperm-associated antigen 11A of Pan troglodytes (Chimpanzee).